Reading from the N-terminus, the 606-residue chain is Putative amino acid transporter AAT1 (606 aa).

Positions 1-156 are disordered; sequence MNKKYGTSSN…DEEGTNKPKR (156 aa). Composition is skewed to basic and acidic residues over residues 12–25 and 72–89; these read HDNKKDKKNNADKN and SDKKNEKSDKNEKNESSK. Residues 140–149 are compositionally biased toward acidic residues; that stretch reads SDGDYTNDEE. A run of 11 helical transmembrane segments spans residues 175–194, 200–225, 246–271, 283–301, 313–332, 352–372, 393–412, 428–449, 522–539, 545–567, and 579–605; these read TVLFICTAIGVGFLSIPYVF, ILSIILIILNAFESYVTTNILCTSSL, TIIDFGLSFGFVSSYILILILISNFL, LFTNNVFLVILICLLILPI, FLIFSLFSLSITVLTIGLQT, HFFKCFNILLFSFSQQPNACF, VILQVIFYTLFGILGYFSFL, VSILLCKFLLSLTFFFSVPLNF, MWISVIVTIFCALIACKV, VIGIGGGITSTLISCLLPNLIYY, and RYSTLFMLCFFSFMGFLSVVVTTLNLI.

It belongs to the amino acid/polyamine transporter 2 family.

Its subcellular location is the vacuole membrane. In terms of biological role, putative amino acid transporter. Probably transports tryptophan. Involved in maintaining the osmotic homeostasis of the digestive vacuole. Important for the timely development and growth of the asexual-stage parasites and male gametocyte maturation. This chain is Putative amino acid transporter AAT1, found in Plasmodium falciparum (isolate 3D7).